A 217-amino-acid polypeptide reads, in one-letter code: 3,4-dihydroxy-2-butanone 4-phosphate synthase (217 aa).

D-ribulose 5-phosphate-binding positions include 37–38 (RE), D42, 150–154 (RRGHT), and E174. A Mg(2+)-binding site is contributed by E38. H153 lines the Mg(2+) pocket.

This sequence belongs to the DHBP synthase family. In terms of assembly, homodimer. Mg(2+) serves as cofactor. The cofactor is Mn(2+).

It catalyses the reaction D-ribulose 5-phosphate = (2S)-2-hydroxy-3-oxobutyl phosphate + formate + H(+). It participates in cofactor biosynthesis; riboflavin biosynthesis; 2-hydroxy-3-oxobutyl phosphate from D-ribulose 5-phosphate: step 1/1. Its function is as follows. Catalyzes the conversion of D-ribulose 5-phosphate to formate and 3,4-dihydroxy-2-butanone 4-phosphate. The protein is 3,4-dihydroxy-2-butanone 4-phosphate synthase of Yersinia enterocolitica serotype O:8 / biotype 1B (strain NCTC 13174 / 8081).